Consider the following 494-residue polypeptide: Cobyric acid synthase (494 aa).

The GATase cobBQ-type domain maps to 254–453; that stretch reads KQTVAVIAYP…LHGLFEDPGA (200 aa). The Nucleophile role is filled by C338. H445 is an active-site residue.

This sequence belongs to the CobB/CobQ family. CobQ subfamily.

It participates in cofactor biosynthesis; adenosylcobalamin biosynthesis. Its function is as follows. Catalyzes amidations at positions B, D, E, and G on adenosylcobyrinic A,C-diamide. NH(2) groups are provided by glutamine, and one molecule of ATP is hydrogenolyzed for each amidation. This chain is Cobyric acid synthase, found in Albidiferax ferrireducens (strain ATCC BAA-621 / DSM 15236 / T118) (Rhodoferax ferrireducens).